Here is a 200-residue protein sequence, read N- to C-terminus: NADH-quinone oxidoreductase subunit C (200 aa).

The protein belongs to the complex I 30 kDa subunit family. As to quaternary structure, NDH-1 is composed of 14 different subunits. Subunits NuoB, C, D, E, F, and G constitute the peripheral sector of the complex.

The protein localises to the cell inner membrane. The enzyme catalyses a quinone + NADH + 5 H(+)(in) = a quinol + NAD(+) + 4 H(+)(out). Functionally, NDH-1 shuttles electrons from NADH, via FMN and iron-sulfur (Fe-S) centers, to quinones in the respiratory chain. The immediate electron acceptor for the enzyme in this species is believed to be ubiquinone. Couples the redox reaction to proton translocation (for every two electrons transferred, four hydrogen ions are translocated across the cytoplasmic membrane), and thus conserves the redox energy in a proton gradient. This is NADH-quinone oxidoreductase subunit C from Burkholderia multivorans (strain ATCC 17616 / 249).